A 439-amino-acid polypeptide reads, in one-letter code: MDHLAHHYHAHIAELNRRVAEIVSREALSGLVIHSGQPHRMFLDDINYPFKANPHFKAWLPVLDNPNCWLVVNGRDKPQLIFYRPVDFWHKVSDVPEMFWTEHFEIKLLTKADKVAELLPSDITNWAYLGEHLDVAEVLGFTSRNPDSVMSYLHFHRTTKTEYELECMRRANQIAVQGHLAAKNAFYNGASEFEIQQQYLSAVGQGDNEVPYGNIIALNQNAAILHYTALEHQNPARRLSFLIDAGASYFGYASDITRTYAFEKNRFDELITAMNKAQLELIDMMRPGVRYPDLHLATHGKVAQMLLDFELATGDAQGLVDQGITSAFFPHGLGHMLGLQVHDVGGFSFDERGTHIPAPEAHPFLRCTRILAPNQVLTMEPGLYIIDTLLNELKQDSRGQQINWRTVDELRPFGGIRIEDNVIVHQDRNENMTRELGLA.

Residues Asp244, Asp255, His335, Glu380, and Glu419 each coordinate Mn(2+).

It belongs to the peptidase M24B family. Bacterial-type prolidase subfamily. It depends on Mn(2+) as a cofactor.

The catalysed reaction is Xaa-L-Pro dipeptide + H2O = an L-alpha-amino acid + L-proline. Splits dipeptides with a prolyl residue in the C-terminal position. The sequence is that of Xaa-Pro dipeptidase from Shewanella sp. (strain MR-7).